The following is a 438-amino-acid chain: Xylose isomerase (438 aa).

Active-site residues include H100 and D103. Residues E231, E267, H270, D295, D306, D308, and D338 each coordinate Mg(2+).

Belongs to the xylose isomerase family. As to quaternary structure, homotetramer. It depends on Mg(2+) as a cofactor.

Its subcellular location is the cytoplasm. It carries out the reaction alpha-D-xylose = alpha-D-xylulofuranose. This chain is Xylose isomerase, found in Thermoanaerobacter sp. (strain X514).